We begin with the raw amino-acid sequence, 254 residues long: Polysaccharide deacetylase domain-containing protein ECU11_0510 (254 aa).

A NodB homology domain is found at 26–210; the sequence is GMIAINFVDG…IGKDKGYRFV (185 aa).

The protein is Polysaccharide deacetylase domain-containing protein ECU11_0510 of Encephalitozoon cuniculi (strain GB-M1) (Microsporidian parasite).